The chain runs to 252 residues: 5-oxoprolinase subunit A 1 (252 aa).

This sequence belongs to the LamB/PxpA family. In terms of assembly, forms a complex composed of PxpA, PxpB and PxpC.

The enzyme catalyses 5-oxo-L-proline + ATP + 2 H2O = L-glutamate + ADP + phosphate + H(+). Its function is as follows. Catalyzes the cleavage of 5-oxoproline to form L-glutamate coupled to the hydrolysis of ATP to ADP and inorganic phosphate. This is 5-oxoprolinase subunit A 1 from Bordetella bronchiseptica (strain ATCC BAA-588 / NCTC 13252 / RB50) (Alcaligenes bronchisepticus).